We begin with the raw amino-acid sequence, 101 residues long: uncharacterized protein (101 aa).

This is an uncharacterized protein from Saccharolobus islandicus (Sulfolobus islandicus).